The primary structure comprises 1086 residues: ATP-dependent helicase/deoxyribonuclease subunit B (1086 aa).

It belongs to the helicase family. AddB/RexB type 2 subfamily. In terms of assembly, heterodimer of AddA and RexB. Mg(2+) serves as cofactor.

Functionally, the heterodimer acts as both an ATP-dependent DNA helicase and an ATP-dependent, dual-direction single-stranded exonuclease. Recognizes the chi site generating a DNA molecule suitable for the initiation of homologous recombination. This subunit has 5' -&gt; 3' nuclease activity but not helicase activity. This chain is ATP-dependent helicase/deoxyribonuclease subunit B, found in Streptococcus uberis (strain ATCC BAA-854 / 0140J).